We begin with the raw amino-acid sequence, 460 residues long: Mitochondrial distribution and morphology protein 10 (460 aa).

Belongs to the MDM10 family. Component of the ER-mitochondria encounter structure (ERMES) or MDM complex, composed of MMM1, MDM10, MDM12 and MDM34. Associates with the mitochondrial outer membrane sorting assembly machinery SAM(core) complex.

Its subcellular location is the mitochondrion outer membrane. Its function is as follows. Component of the ERMES/MDM complex, which serves as a molecular tether to connect the endoplasmic reticulum and mitochondria. Components of this complex are involved in the control of mitochondrial shape and protein biogenesis and may function in phospholipid exchange. MDM10 is involved in the late assembly steps of the general translocase of the mitochondrial outer membrane (TOM complex). Functions in the TOM40-specific route of the assembly of outer membrane beta-barrel proteins, including the association of TOM40 with the receptor TOM22 and small TOM proteins. Can associate with the SAM(core) complex as well as the MDM12-MMM1 complex, both involved in late steps of the major beta-barrel assembly pathway, that is responsible for biogenesis of all outer membrane beta-barrel proteins. May act as a switch that shuttles between both complexes and channels precursor proteins into the TOM40-specific pathway. Plays a role in mitochondrial morphology and in the inheritance of mitochondria. The polypeptide is Mitochondrial distribution and morphology protein 10 (Candida glabrata (strain ATCC 2001 / BCRC 20586 / JCM 3761 / NBRC 0622 / NRRL Y-65 / CBS 138) (Yeast)).